We begin with the raw amino-acid sequence, 106 residues long: Iron-sulfur cluster assembly protein CyaY (106 aa).

This sequence belongs to the frataxin family.

Functionally, involved in iron-sulfur (Fe-S) cluster assembly. May act as a regulator of Fe-S biogenesis. This is Iron-sulfur cluster assembly protein CyaY from Photorhabdus laumondii subsp. laumondii (strain DSM 15139 / CIP 105565 / TT01) (Photorhabdus luminescens subsp. laumondii).